The primary structure comprises 379 residues: Lipid-A-disaccharide synthase (379 aa).

The protein belongs to the LpxB family.

The enzyme catalyses a lipid X + a UDP-2-N,3-O-bis[(3R)-3-hydroxyacyl]-alpha-D-glucosamine = a lipid A disaccharide + UDP + H(+). It functions in the pathway bacterial outer membrane biogenesis; LPS lipid A biosynthesis. Its function is as follows. Condensation of UDP-2,3-diacylglucosamine and 2,3-diacylglucosamine-1-phosphate to form lipid A disaccharide, a precursor of lipid A, a phosphorylated glycolipid that anchors the lipopolysaccharide to the outer membrane of the cell. In Aeromonas hydrophila subsp. hydrophila (strain ATCC 7966 / DSM 30187 / BCRC 13018 / CCUG 14551 / JCM 1027 / KCTC 2358 / NCIMB 9240 / NCTC 8049), this protein is Lipid-A-disaccharide synthase.